A 385-amino-acid polypeptide reads, in one-letter code: GTPase Obg (385 aa).

The Obg domain occupies 1 to 159 (MKFVDEATIL…REIQLELMLL (159 aa)). Positions 160 to 333 (ADVGMLGLPN…LCWDVMAFIN (174 aa)) constitute an OBG-type G domain. GTP is bound by residues 166 to 173 (GLPNAGKS), 191 to 195 (FTTLV), 213 to 216 (DIPG), 283 to 286 (NKAD), and 314 to 316 (SAA). The Mg(2+) site is built by Ser173 and Thr193. Positions 362 to 379 (QQEEAEETLDDDWDEDGV) are enriched in acidic residues. The disordered stretch occupies residues 362–385 (QQEEAEETLDDDWDEDGVETIYQR).

This sequence belongs to the TRAFAC class OBG-HflX-like GTPase superfamily. OBG GTPase family. As to quaternary structure, monomer. Mg(2+) is required as a cofactor.

The protein resides in the cytoplasm. Functionally, an essential GTPase which binds GTP, GDP and possibly (p)ppGpp with moderate affinity, with high nucleotide exchange rates and a fairly low GTP hydrolysis rate. Plays a role in control of the cell cycle, stress response, ribosome biogenesis and in those bacteria that undergo differentiation, in morphogenesis control. This is GTPase Obg from Sodalis glossinidius (strain morsitans).